The chain runs to 606 residues: Pyruvate decarboxylase 2 (606 aa).

Asp-68 and His-155 together coordinate substrate. Positions 433–515 are thiamine pyrophosphate binding; that stretch reads DSWFNCQKLK…FLINNGGYTI (83 aa). Mg(2+) is bound by residues Asp-483, Asn-510, and Gly-512. Glu-516 serves as a coordination point for substrate.

It belongs to the TPP enzyme family. Homotetramer. Requires a metal cation as cofactor. It depends on thiamine diphosphate as a cofactor.

It carries out the reaction a 2-oxocarboxylate + H(+) = an aldehyde + CO2. This is Pyruvate decarboxylase 2 (PDC2) from Oryza sativa subsp. indica (Rice).